The chain runs to 222 residues: Pyrrolidone-carboxylate peptidase (222 aa).

Catalysis depends on residues Glu80, Cys146, and His170.

Belongs to the peptidase C15 family. In terms of assembly, homotetramer.

Its subcellular location is the cytoplasm. The catalysed reaction is Release of an N-terminal pyroglutamyl group from a polypeptide, the second amino acid generally not being Pro.. Removes 5-oxoproline from various penultimate amino acid residues except L-proline. This Mycobacterium marinum (strain ATCC BAA-535 / M) protein is Pyrrolidone-carboxylate peptidase.